The following is a 105-amino-acid chain: Large ribosomal subunit protein bL21 (105 aa).

Belongs to the bacterial ribosomal protein bL21 family. In terms of assembly, part of the 50S ribosomal subunit. Contacts protein L20.

This protein binds to 23S rRNA in the presence of protein L20. This is Large ribosomal subunit protein bL21 from Rickettsia prowazekii (strain Madrid E).